A 371-amino-acid polypeptide reads, in one-letter code: Protease PrtS (371 aa).

His169 serves as a coordination point for Zn(2+). Glu170 is a catalytic residue. Residues His173 and Glu193 each coordinate Zn(2+). His273 functions as the Proton donor in the catalytic mechanism. Residues 352-371 are disordered; sequence KEEDKDKGKDEGKDKAETKV.

The protein belongs to the peptidase M4 family. It depends on Zn(2+) as a cofactor.

Its subcellular location is the secreted. Its activity is regulated as follows. Inhibited by 8 mM 1,10-phenanthroline, but not by EDTA or PMSF. Functionally, metalloprotease involved in the inhibition of insect antibacterial peptides. Reduces the antibacterial activity of G.mellonella hemolymph by 50%. Reduces the antibacterial activity of cecropin A by 80% and completely inhibits cecropin B. This is Protease PrtS from Photorhabdus sp. (strain Az29).